Consider the following 261-residue polypeptide: Glucose 1-dehydrogenase 3 (261 aa).

Position 11 to 35 (11 to 35) interacts with NAD(+); the sequence is VITGGSTGLGRAMAVRFGQEEAKVV. Position 145 (S145) interacts with substrate. The active-site Proton acceptor is Y158.

Belongs to the short-chain dehydrogenases/reductases (SDR) family. In terms of assembly, homotetramer.

The enzyme catalyses D-glucose + NAD(+) = D-glucono-1,5-lactone + NADH + H(+). It catalyses the reaction D-glucose + NADP(+) = D-glucono-1,5-lactone + NADPH + H(+). This Priestia megaterium (Bacillus megaterium) protein is Glucose 1-dehydrogenase 3 (gdhIII).